Consider the following 382-residue polypeptide: MVEKMNEEVMDSKELQVGDVVTGSVTKVEEKQVLVNVGYKTDGVIPISELANVHIEKASDVVELDQILELKIIKLEENDLVLSKRAVDAEKAWIELQEKFTSGHVFDVTVKDIVNGGLVVDLGVRGFIPASLVEVHYVEDFTDYKGKTLAVKIVELDREKNRVILSHKAVVELELDSKKKEAISSLKEGDVVEGTVQRLTDFGAFVNVGGVDGLVHISQISHERVEQPSEVLEQGQKVKVKVLSVDADTQRISLSIKAAQPGPWENIAGEVKAGDIREGIVKRLVTFGAFVEILPGVEGLVHVSQIANRHVKNPNEVLEMGQEVKVKVLEVHVAEKRISLSIKEAFEENNVTEDYSQYEPNADSATFQLSDIIGEQLKKLKK.

S1 motif domains are found at residues 18 to 85 (GDVV…LSKR), 103 to 168 (GHVF…LSHK), 189 to 257 (GDVV…LSIK), and 274 to 343 (GDIR…LSIK). Ser244 carries the post-translational modification Phosphoserine.

The protein belongs to the bacterial ribosomal protein bS1 family.

The polypeptide is Small ribosomal subunit protein bS1 homolog (Bacillus cereus (strain ATCC 10987 / NRS 248)).